Consider the following 887-residue polypeptide: Pyruvate dehydrogenase E1 component (887 aa).

In terms of assembly, homodimer. Part of the PDH complex, consisting of multiple copies of pyruvate dehydrogenase (E1), dihydrolipoamide acetyltransferase (E2) and lipoamide dehydrogenase (E3). Requires thiamine diphosphate as cofactor.

It catalyses the reaction N(6)-[(R)-lipoyl]-L-lysyl-[protein] + pyruvate + H(+) = N(6)-[(R)-S(8)-acetyldihydrolipoyl]-L-lysyl-[protein] + CO2. Functionally, component of the pyruvate dehydrogenase (PDH) complex, that catalyzes the overall conversion of pyruvate to acetyl-CoA and CO(2). The polypeptide is Pyruvate dehydrogenase E1 component (aceE) (Buchnera aphidicola subsp. Baizongia pistaciae (strain Bp)).